Here is a 459-residue protein sequence, read N- to C-terminus: GTPase Der (459 aa).

EngA-type G domains are found at residues 4–169 (PLVA…PEVA) and 179–355 (IAVA…AAHR). GTP is bound by residues 10–17 (GRPNVGKS), 57–61 (DTGGL), 120–123 (NKCE), 185–192 (GRPNVGKS), 232–236 (DTAGI), and 297–300 (NKWD). One can recognise a KH-like domain in the interval 356–441 (KRIATSVVNE…PIRFRWRSKS (86 aa)).

It belongs to the TRAFAC class TrmE-Era-EngA-EngB-Septin-like GTPase superfamily. EngA (Der) GTPase family. Associates with the 50S ribosomal subunit.

Its function is as follows. GTPase that plays an essential role in the late steps of ribosome biogenesis. The protein is GTPase Der of Synechococcus sp. (strain JA-3-3Ab) (Cyanobacteria bacterium Yellowstone A-Prime).